The following is a 561-amino-acid chain: Probable oligo-1,6-glucosidase 2 (561 aa).

The active-site Nucleophile is D199. The Proton donor role is filled by E255.

The protein belongs to the glycosyl hydrolase 13 family.

The protein localises to the cytoplasm. The enzyme catalyses Hydrolysis of (1-&gt;6)-alpha-D-glucosidic linkages in some oligosaccharides produced from starch and glycogen by alpha-amylase, and in isomaltose.. The polypeptide is Probable oligo-1,6-glucosidase 2 (ycdG) (Bacillus subtilis (strain 168)).